Here is a 237-residue protein sequence, read N- to C-terminus: Uridylate kinase (237 aa).

11 to 14 (KLSG) provides a ligand contact to ATP. Glycine 53 is a UMP binding site. Residues glycine 54 and arginine 58 each contribute to the ATP site. Residues aspartate 73 and 134 to 141 (TGNPFFTT) each bind UMP. Residues threonine 161, tyrosine 167, and aspartate 170 each coordinate ATP.

Belongs to the UMP kinase family. Homohexamer.

The protein resides in the cytoplasm. The enzyme catalyses UMP + ATP = UDP + ADP. It participates in pyrimidine metabolism; CTP biosynthesis via de novo pathway; UDP from UMP (UMPK route): step 1/1. With respect to regulation, inhibited by UTP. In terms of biological role, catalyzes the reversible phosphorylation of UMP to UDP. The protein is Uridylate kinase of Burkholderia thailandensis (strain ATCC 700388 / DSM 13276 / CCUG 48851 / CIP 106301 / E264).